A 601-amino-acid chain; its full sequence is Protein FAM13C (601 aa).

Disordered stretches follow at residues 82–134 (SMGN…PQSS) and 192–238 (DGQV…EDLQ). The segment covering 98-111 (ESGRNHGESQETEH) has biased composition (basic and acidic residues). Ser130 is subject to Phosphoserine. Residues 200-217 (DPAPASTQSAPADSADPA) show a composition bias toward low complexity. Ser258 carries the phosphoserine modification. Disordered regions lie at residues 268–304 (QRFNLDPESAPSPPSSQQFMMPRSSSRCGSGDGKEPQ), 327–352 (FEQEKKYRPSHGDKTSNPEVLKWMND), and 366–485 (KLSE…DPVS). A compositionally biased stretch (low complexity) spans 282–294 (SSQQFMMPRSSSR). Positions 327 to 342 (FEQEKKYRPSHGDKTS) are enriched in basic and acidic residues. 2 positions are modified to phosphoserine: Ser405 and Ser406. Positions 415-446 (VPEKREQTPPQDDGKGTKQDKNLIKPLYDRCR) are enriched in basic and acidic residues. Residues 462–471 (QEEEDSDEDC) are compositionally biased toward acidic residues.

It belongs to the FAM13 family.

The polypeptide is Protein FAM13C (Fam13c) (Mus musculus (Mouse)).